The following is a 522-amino-acid chain: MVLMILPIIGSVSVSEGLVAIVTLCLVYMLMKYKHTEIPEGLKRLPGPKPLPIIGNVLEVYNNPHLSLTAMSERYGSVFQIQIGMRPVVVLSGNETVRQALIKQGEDFAGRPDLYSFKFINDGKSLAFSTDKAGVWRARRKLAMSALRSFATLEGTTPEYSCALEEHVCKEGEYLVKQLTSVMDVSGSFDPFRHIVVSVANVICGMCFGRRYSHDDQELLGLVNMSDEFGQVVGSGNPADFIPILRYLPNRTMKRFMDINDRFNNFVQKIVSEHYESYDKDNIRDITDSLIDHCEDRKLDENANIQVSDEKIVGIVNDLFGAGFDTISTALSWAVVYLVAYPEIQERLHQELKEKVGMIRTPRLSDKINLPLLEAFILEIFRHSSFLPFTIPHCTIKDTSLNGYFIPKDTCVFINQWQVNHDPELWKEPSSFNPDRFLSADGTELNKLEGEKVLVFGMDKRRCIGEAIGRNEVYLFLAILLQRLRFQEKPGHPLDMTPEYGLTMKHKRCQLKASMRPWGQEE.

A substrate-binding site is contributed by Phe-229. Cys-463 contacts heme.

Belongs to the cytochrome P450 family. It depends on heme as a cofactor. As to expression, liver.

It is found in the endoplasmic reticulum membrane. The protein resides in the microsome membrane. It catalyses the reaction an organic molecule + reduced [NADPH--hemoprotein reductase] + O2 = an alcohol + oxidized [NADPH--hemoprotein reductase] + H2O + H(+). Functionally, cytochromes P450 are a group of heme-thiolate monooxygenases. They oxidize a variety of structurally unrelated compounds, including steroids, fatty acids, and xenobiotics. This is Cytochrome P450 1A1 (cyp1a1) from Oncorhynchus mykiss (Rainbow trout).